The chain runs to 264 residues: Octanoyltransferase (264 aa).

In terms of domain architecture, BPL/LPL catalytic spans Gly74–Gln262. Substrate is bound by residues Arg113–His120, Ala193–Gly195, and Gly206–Ala208. The active-site Acyl-thioester intermediate is Cys224.

This sequence belongs to the LipB family.

The protein localises to the cytoplasm. It carries out the reaction octanoyl-[ACP] + L-lysyl-[protein] = N(6)-octanoyl-L-lysyl-[protein] + holo-[ACP] + H(+). It functions in the pathway protein modification; protein lipoylation via endogenous pathway; protein N(6)-(lipoyl)lysine from octanoyl-[acyl-carrier-protein]: step 1/2. Catalyzes the transfer of endogenously produced octanoic acid from octanoyl-acyl-carrier-protein onto the lipoyl domains of lipoate-dependent enzymes. Lipoyl-ACP can also act as a substrate although octanoyl-ACP is likely to be the physiological substrate. The polypeptide is Octanoyltransferase (Brucella melitensis biotype 1 (strain ATCC 23456 / CCUG 17765 / NCTC 10094 / 16M)).